A 108-amino-acid chain; its full sequence is MLKTTLLFFVTALCEIIGCFLPWLWIKRGASVWWLLPAAASLALFVWLLTLHPAASGRVYAAYGGVYVCTALLWLRVVDGVRLTVYDWSGALIALCGMLIIVVGWGRT.

Residues 1–5 lie on the Periplasmic side of the membrane; it reads MLKTT. A helical membrane pass occupies residues 6 to 26; sequence LLFFVTALCEIIGCFLPWLWI. The Cytoplasmic portion of the chain corresponds to 27-30; that stretch reads KRGA. A helical membrane pass occupies residues 31 to 51; that stretch reads SVWWLLPAAASLALFVWLLTL. Topologically, residues 52–60 are periplasmic; that stretch reads HPAASGRVY. A helical membrane pass occupies residues 61–81; sequence AAYGGVYVCTALLWLRVVDGV. At 82–84 the chain is on the cytoplasmic side; the sequence is RLT. Residues 85 to 105 traverse the membrane as a helical segment; that stretch reads VYDWSGALIALCGMLIIVVGW. At 106–108 the chain is on the periplasmic side; it reads GRT.

Belongs to the UPF0060 family.

The protein localises to the cell inner membrane. The polypeptide is UPF0060 membrane protein YnfA (Salmonella typhi).